Here is a 540-residue protein sequence, read N- to C-terminus: GMP synthase [glutamine-hydrolyzing] (540 aa).

The 194-residue stretch at Lys-29–Asp-222 folds into the Glutamine amidotransferase type-1 domain. Cys-106 serves as the catalytic Nucleophile. Catalysis depends on residues His-196 and Glu-198. The GMPS ATP-PPase domain occupies Trp-223–Arg-415. An ATP-binding site is contributed by Ser-250–Ala-256.

As to quaternary structure, homodimer.

It carries out the reaction XMP + L-glutamine + ATP + H2O = GMP + L-glutamate + AMP + diphosphate + 2 H(+). It participates in purine metabolism; GMP biosynthesis; GMP from XMP (L-Gln route): step 1/1. In terms of biological role, catalyzes the synthesis of GMP from XMP. The chain is GMP synthase [glutamine-hydrolyzing] from Rhodopseudomonas palustris (strain HaA2).